A 162-amino-acid chain; its full sequence is Large ribosomal subunit protein uL15 (162 aa).

The segment at 1–41 is disordered; sequence MKLSDIADNAGSRKKRMRVGRGIGSGKGKTAGRGGKGQTAR. Residues 21–37 are compositionally biased toward gly residues; it reads RGIGSGKGKTAGRGGKG.

Belongs to the universal ribosomal protein uL15 family. In terms of assembly, part of the 50S ribosomal subunit.

In terms of biological role, binds to the 23S rRNA. The protein is Large ribosomal subunit protein uL15 of Rhodopseudomonas palustris (strain BisB18).